Consider the following 106-residue polypeptide: Thioredoxin (106 aa).

The Thioredoxin domain maps to Gly1 to Leu106. The cysteines at positions 31 and 34 are disulfide-linked.

Belongs to the thioredoxin family.

In terms of biological role, participates in various redox reactions through the reversible oxidation of its active center dithiol to a disulfide and catalyzes dithiol-disulfide exchange reactions. This chain is Thioredoxin (trxA), found in Kitasatospora aureofaciens (Streptomyces aureofaciens).